The primary structure comprises 856 residues: Envelope glycoprotein gp160 (856 aa).

The N-terminal stretch at M1–E32 is a signal peptide. Residues K33–I684 are Extracellular-facing. C54 and C74 are oxidised to a cystine. N-linked (GlcNAc...) asparagine; by host glycosylation is found at N88, N136, N141, N156, N160, N186, N197, N230, N234, N241, N262, N276, N289, N295, N301, N332, N339, and N356. Intrachain disulfides connect C119-C205, C126-C196, C131-C157, C218-C247, and C228-C239. A V1 region spans residues C131–N156. The V2 stretch occupies residues C157 to C196. A V3 region spans residues C296–H330. A disulfide bridge links C296 with C331. Residues S364–H374 form a CD4-binding loop region. Intrachain disulfides connect C378–C445 and C385–C418. The segment at C385–C418 is V4. N-linked (GlcNAc...) asparagine; by host glycosylation is found at N386, N392, N397, N406, N448, and N463. V5 stretches follow at residues N461–G471 and N463–G471. The interval A512 to A532 is fusion peptide. Residues K574–L592 form an immunosuppression region. Cysteines 598 and 604 form a disulfide. 5 N-linked (GlcNAc...) asparagine; by host glycosylation sites follow: N611, N616, N624, N637, and N674. A coiled-coil region spans residues R633 to A667. The segment at E662–K683 is MPER; binding to GalCer. Residues F685–V705 traverse the membrane as a helical segment. Topologically, residues N706–L856 are cytoplasmic. Residues L715–R742 are disordered. 2 S-palmitoyl cysteine; by host lipidation sites follow: C764 and C837. Residues L855 to L856 carry the Di-leucine internalization motif motif.

Belongs to the HIV-1 env protein family. In terms of assembly, the mature envelope protein (Env) consists of a homotrimer of non-covalently associated gp120-gp41 heterodimers. The resulting complex protrudes from the virus surface as a spike. There seems to be as few as 10 spikes on the average virion. Interacts with host CD4, CCR5 and CXCR4. Gp120 also interacts with the C-type lectins CD209/DC-SIGN and CLEC4M/DC-SIGNR (collectively referred to as DC-SIGN(R)). Gp120 and gp41 interact with GalCer. Gp120 interacts with host ITGA4/ITGB7 complex; on CD4+ T-cells, this interaction results in rapid activation of integrin ITGAL/LFA-1, which facilitates efficient cell-to-cell spreading of HIV-1. Gp120 interacts with cell-associated heparan sulfate; this interaction increases virus infectivity on permissive cells and may be involved in infection of CD4- cells. The mature envelope protein (Env) consists of a homotrimer of non-covalently associated gp120-gp41 heterodimers. The resulting complex protrudes from the virus surface as a spike. There seems to be as few as 10 spikes on the average virion. In terms of processing, highly glycosylated by host. The high number of glycan on the protein is reffered to as 'glycan shield' because it contributes to hide protein sequence from adaptive immune system. Palmitoylation of the transmembrane protein and of Env polyprotein (prior to its proteolytic cleavage) is essential for their association with host cell membrane lipid rafts. Palmitoylation is therefore required for envelope trafficking to classical lipid rafts, but not for viral replication. Post-translationally, specific enzymatic cleavages in vivo yield mature proteins. Envelope glycoproteins are synthesized as an inactive precursor that is heavily N-glycosylated and processed likely by host cell furin in the Golgi to yield the mature SU and TM proteins. The cleavage site between SU and TM requires the minimal sequence [KR]-X-[KR]-R. About 2 of the 9 disulfide bonds of gp41 are reduced by P4HB/PDI, following binding to CD4 receptor.

It localises to the virion membrane. Its subcellular location is the host cell membrane. It is found in the host endosome membrane. Oligomerizes in the host endoplasmic reticulum into predominantly trimers. In a second time, gp160 transits in the host Golgi, where glycosylation is completed. The precursor is then proteolytically cleaved in the trans-Golgi and thereby activated by cellular furin or furin-like proteases to produce gp120 and gp41. In terms of biological role, attaches the virus to the host lymphoid cell by binding to the primary receptor CD4. This interaction induces a structural rearrangement creating a high affinity binding site for a chemokine coreceptor like CXCR4 and/or CCR5. Acts as a ligand for CD209/DC-SIGN and CLEC4M/DC-SIGNR, which are respectively found on dendritic cells (DCs), and on endothelial cells of liver sinusoids and lymph node sinuses. These interactions allow capture of viral particles at mucosal surfaces by these cells and subsequent transmission to permissive cells. HIV subverts the migration properties of dendritic cells to gain access to CD4+ T-cells in lymph nodes. Virus transmission to permissive T-cells occurs either in trans (without DCs infection, through viral capture and transmission), or in cis (following DCs productive infection, through the usual CD4-gp120 interaction), thereby inducing a robust infection. In trans infection, bound virions remain infectious over days and it is proposed that they are not degraded, but protected in non-lysosomal acidic organelles within the DCs close to the cell membrane thus contributing to the viral infectious potential during DCs' migration from the periphery to the lymphoid tissues. On arrival at lymphoid tissues, intact virions recycle back to DCs' cell surface allowing virus transmission to CD4+ T-cells. Its function is as follows. Acts as a class I viral fusion protein. Under the current model, the protein has at least 3 conformational states: pre-fusion native state, pre-hairpin intermediate state, and post-fusion hairpin state. During fusion of viral and target intracellular membranes, the coiled coil regions (heptad repeats) assume a trimer-of-hairpins structure, positioning the fusion peptide in close proximity to the C-terminal region of the ectodomain. The formation of this structure appears to drive apposition and subsequent fusion of viral and target cell membranes. Complete fusion occurs in host cell endosomes and is dynamin-dependent, however some lipid transfer might occur at the plasma membrane. The virus undergoes clathrin-dependent internalization long before endosomal fusion, thus minimizing the surface exposure of conserved viral epitopes during fusion and reducing the efficacy of inhibitors targeting these epitopes. Membranes fusion leads to delivery of the nucleocapsid into the cytoplasm. The polypeptide is Envelope glycoprotein gp160 (Homo sapiens (Human)).